Here is a 467-residue protein sequence, read N- to C-terminus: Dimethylamine methyltransferase MtbB1 (467 aa).

O356 is a non-standard amino acid (pyrrolysine).

This sequence belongs to the dimethylamine methyltransferase family. In terms of assembly, may form homotetramers or homopentamers.

It carries out the reaction Co(I)-[dimethylamine-specific corrinoid protein] + dimethylamine + H(+) = methyl-Co(III)-[dimethylamine-specific corrinoid protein] + methylamine. It participates in one-carbon metabolism; methanogenesis from dimethylamine. In terms of biological role, catalyzes the transfer of a methyl group from dimethylamine to the corrinoid cofactor of MtbC. The major or perhaps only DMA methyltransferase expressed under inducing conditions. This chain is Dimethylamine methyltransferase MtbB1, found in Methanosarcina barkeri.